An 87-amino-acid chain; its full sequence is Small ribosomal subunit protein bS20 (87 aa).

The protein belongs to the bacterial ribosomal protein bS20 family.

In terms of biological role, binds directly to 16S ribosomal RNA. This chain is Small ribosomal subunit protein bS20, found in Clostridium perfringens (strain ATCC 13124 / DSM 756 / JCM 1290 / NCIMB 6125 / NCTC 8237 / Type A).